Here is a 171-residue protein sequence, read N- to C-terminus: Shikimate kinase (171 aa).

14–19 provides a ligand contact to ATP; the sequence is GAGKST. Serine 18 lines the Mg(2+) pocket. Positions 36, 60, and 82 each coordinate substrate. Arginine 120 is a binding site for ATP. Arginine 139 lines the substrate pocket. ATP is bound at residue glutamine 156.

It belongs to the shikimate kinase family. As to quaternary structure, monomer. Requires Mg(2+) as cofactor.

It is found in the cytoplasm. The enzyme catalyses shikimate + ATP = 3-phosphoshikimate + ADP + H(+). Its pathway is metabolic intermediate biosynthesis; chorismate biosynthesis; chorismate from D-erythrose 4-phosphate and phosphoenolpyruvate: step 5/7. Functionally, catalyzes the specific phosphorylation of the 3-hydroxyl group of shikimic acid using ATP as a cosubstrate. This Shewanella denitrificans (strain OS217 / ATCC BAA-1090 / DSM 15013) protein is Shikimate kinase.